Consider the following 767-residue polypeptide: Polyketide biosynthesis protein PksE (767 aa).

The tract at residues 1–312 (MITYVFPGQG…QRNVQAGITA (312 aa)) is acyl transferase. Active-site residues include serine 87 and histidine 193.

It in the N-terminal section; belongs to the FabD family.

It localises to the cytoplasm. It carries out the reaction holo-[ACP] + malonyl-CoA = malonyl-[ACP] + CoA. Its pathway is antibiotic biosynthesis; bacillaene biosynthesis. Its function is as follows. Probably involved in some intermediate steps for the synthesis of the antibiotic polyketide bacillaene which is involved in secondary metabolism. Probably has an acyl transferase activity and could also have a flavin mononucleotide-dependent oxidoreductase activity. This Bacillus subtilis (strain 168) protein is Polyketide biosynthesis protein PksE (pksE).